A 407-amino-acid polypeptide reads, in one-letter code: Proteasome-activating nucleotidase (407 aa).

Residues 22–67 (KEKAYLAELESKVLRLELKNKDITRENVQIKKENEILKRELDKLRI) adopt a coiled-coil conformation. Residues 192–197 (GTGKTL) and His331 contribute to the ATP site. The segment at 405 to 407 (MYG) is docks into pockets in the proteasome alpha-ring to cause gate opening.

Belongs to the AAA ATPase family. In terms of assembly, homohexamer. The hexameric complex has a two-ring architecture resembling a top hat that caps the 20S proteasome core at one or both ends. Upon ATP-binding, the C-terminus of PAN interacts with the alpha-rings of the proteasome core by binding to the intersubunit pockets.

The protein resides in the cytoplasm. Its function is as follows. ATPase which is responsible for recognizing, binding, unfolding and translocation of substrate proteins into the archaeal 20S proteasome core particle. Is essential for opening the gate of the 20S proteasome via an interaction with its C-terminus, thereby allowing substrate entry and access to the site of proteolysis. Thus, the C-termini of the proteasomal ATPase function like a 'key in a lock' to induce gate opening and therefore regulate proteolysis. Unfolding activity requires energy from ATP hydrolysis, whereas ATP binding alone promotes ATPase-20S proteasome association which triggers gate opening, and supports translocation of unfolded substrates. The sequence is that of Proteasome-activating nucleotidase from Methanococcus vannielii (strain ATCC 35089 / DSM 1224 / JCM 13029 / OCM 148 / SB).